A 193-amino-acid chain; its full sequence is Ribonuclease HII (193 aa).

The 179-residue stretch at tyrosine 15–cysteine 193 folds into the RNase H type-2 domain. A divalent metal cation-binding residues include aspartate 21, glutamate 22, and aspartate 112.

Belongs to the RNase HII family. The cofactor is Mn(2+). Requires Mg(2+) as cofactor.

The protein localises to the cytoplasm. It carries out the reaction Endonucleolytic cleavage to 5'-phosphomonoester.. Functionally, endonuclease that specifically degrades the RNA of RNA-DNA hybrids. This Rickettsia akari (strain Hartford) protein is Ribonuclease HII.